A 277-amino-acid polypeptide reads, in one-letter code: Nudix hydrolase 10 (277 aa).

Positions 97–235 (WIPEAESTIP…KNDLFKDIHH (139 aa)) constitute a Nudix hydrolase domain. Positions 142–163 (GVVDEGEEIFAAAIREVKEETG) match the Nudix box motif. Mg(2+) is bound by residues Glu157 and Glu161.

The protein belongs to the Nudix hydrolase family. Mg(2+) is required as a cofactor. It depends on Mn(2+) as a cofactor. Expressed in roots, stems and, at lower level, leaves.

The catalysed reaction is ADP-D-ribose + H2O = D-ribose 5-phosphate + AMP + 2 H(+). The enzyme catalyses NAD(+) + H2O = beta-nicotinamide D-ribonucleotide + AMP + 2 H(+). It carries out the reaction NADH + H2O = reduced beta-nicotinamide D-ribonucleotide + AMP + 2 H(+). Its function is as follows. May mediate the hydrolysis of some nucleoside diphosphate derivatives. In vitro, uses both ADP-ribose and NADH as substrates; however the relevance of such substrates in vivo is unclear. This Arabidopsis thaliana (Mouse-ear cress) protein is Nudix hydrolase 10 (NUDT10).